The sequence spans 343 residues: Anthranilate phosphoribosyltransferase (343 aa).

Residues Gly-84, 87–88 (GD), Thr-92, 94–97 (NIST), 112–120 (KHGNRGVSS), and Ser-124 each bind 5-phospho-alpha-D-ribose 1-diphosphate. Gly-84 is an anthranilate binding site. A Mg(2+)-binding site is contributed by Ser-96. Asn-115 provides a ligand contact to anthranilate. Arg-170 serves as a coordination point for anthranilate. Positions 229 and 230 each coordinate Mg(2+).

Belongs to the anthranilate phosphoribosyltransferase family. Homodimer. It depends on Mg(2+) as a cofactor.

It carries out the reaction N-(5-phospho-beta-D-ribosyl)anthranilate + diphosphate = 5-phospho-alpha-D-ribose 1-diphosphate + anthranilate. It participates in amino-acid biosynthesis; L-tryptophan biosynthesis; L-tryptophan from chorismate: step 2/5. Catalyzes the transfer of the phosphoribosyl group of 5-phosphorylribose-1-pyrophosphate (PRPP) to anthranilate to yield N-(5'-phosphoribosyl)-anthranilate (PRA). This chain is Anthranilate phosphoribosyltransferase, found in Burkholderia pseudomallei (strain 1106a).